The following is a 694-amino-acid chain: DNA primase (694 aa).

The CHC2-type zinc finger occupies 41 to 65 (CPFHDDKSPSFTVSPAKQFYYCFSC). One can recognise a Toprim domain in the interval 265–348 (DQAVVVEGYF…QGQVQLRVLN (84 aa)). 3 residues coordinate Mg(2+): Glu271, Asp317, and Asp319.

This sequence belongs to the DnaG primase family. In terms of assembly, monomer. Interacts with DnaB. The cofactor is Zn(2+). Requires Mg(2+) as cofactor.

It carries out the reaction ssDNA + n NTP = ssDNA/pppN(pN)n-1 hybrid + (n-1) diphosphate.. Functionally, RNA polymerase that catalyzes the synthesis of short RNA molecules used as primers for DNA polymerase during DNA replication. The protein is DNA primase of Synechococcus elongatus (strain ATCC 33912 / PCC 7942 / FACHB-805) (Anacystis nidulans R2).